Here is a 313-residue protein sequence, read N- to C-terminus: Ribosomal RNA small subunit methyltransferase H (313 aa).

S-adenosyl-L-methionine is bound by residues 36–38, D56, F80, D102, and Q109; that span reads GGH.

The protein belongs to the methyltransferase superfamily. RsmH family.

It is found in the cytoplasm. The enzyme catalyses cytidine(1402) in 16S rRNA + S-adenosyl-L-methionine = N(4)-methylcytidine(1402) in 16S rRNA + S-adenosyl-L-homocysteine + H(+). Functionally, specifically methylates the N4 position of cytidine in position 1402 (C1402) of 16S rRNA. The polypeptide is Ribosomal RNA small subunit methyltransferase H (Actinobacillus pleuropneumoniae serotype 7 (strain AP76)).